Consider the following 380-residue polypeptide: Succinyl-diaminopimelate desuccinylase (380 aa).

Histidine 69 is a binding site for Zn(2+). Aspartate 71 is an active-site residue. Position 102 (aspartate 102) interacts with Zn(2+). Glutamate 135 functions as the Proton acceptor in the catalytic mechanism. Zn(2+)-binding residues include glutamate 136, glutamate 164, and histidine 353.

It belongs to the peptidase M20A family. DapE subfamily. As to quaternary structure, homodimer. Zn(2+) is required as a cofactor. Requires Co(2+) as cofactor.

The enzyme catalyses N-succinyl-(2S,6S)-2,6-diaminopimelate + H2O = (2S,6S)-2,6-diaminopimelate + succinate. It participates in amino-acid biosynthesis; L-lysine biosynthesis via DAP pathway; LL-2,6-diaminopimelate from (S)-tetrahydrodipicolinate (succinylase route): step 3/3. In terms of biological role, catalyzes the hydrolysis of N-succinyl-L,L-diaminopimelic acid (SDAP), forming succinate and LL-2,6-diaminopimelate (DAP), an intermediate involved in the bacterial biosynthesis of lysine and meso-diaminopimelic acid, an essential component of bacterial cell walls. The chain is Succinyl-diaminopimelate desuccinylase from Cereibacter sphaeroides (strain ATCC 17029 / ATH 2.4.9) (Rhodobacter sphaeroides).